A 428-amino-acid polypeptide reads, in one-letter code: MKRDKVQTLHGEIHIPGDKSISHRSVMFGALAAGTTTVKNFLPGADCLSTIDCFRKMGVHIEQSSSDVVIHGKGIDALKEPESLLDVGNSGTTIRLMLGILAGRPFYSAVAGDESIAKRPMKRVTEPLKKMGAKIDGRAGGEFTPLSVSGASLKGIDYVSPVASAQIKSAVLLAGLQAEGTTTVTEPHKSRDHTERMLSAFGVKLSEDQTSVSIAGGQKLTAADIFVPGDISSAAFFLAAGAMVPNSRIVLKNVGLNPTRTGIIDVLQNMGAKLEIKPSADSGAEPYGDLIIETSSLKAVEIGGDIIPRLIDEIPIIALLATQAEGTTVIKDAAELKVKETNRIDTVVSELRKLGAEIEPTADGMKVYGKQTLKGGAAVSSHGDHRIGMMLGIASCITEEPIEIEHTDAIHVSYPTFFEHLNKLSKKS.

3-phosphoshikimate is bound by residues Lys-19, Ser-20, and Arg-24. Lys-19 is a phosphoenolpyruvate binding site. Residues Gly-91 and Arg-119 each coordinate phosphoenolpyruvate. Residues Ser-164, Gln-166, Asp-312, and Lys-339 each contribute to the 3-phosphoshikimate site. Gln-166 is a phosphoenolpyruvate binding site. Residue Asp-312 is the Proton acceptor of the active site. 2 residues coordinate phosphoenolpyruvate: Arg-343 and Arg-386.

Belongs to the EPSP synthase family. Monomer.

It localises to the cytoplasm. The enzyme catalyses 3-phosphoshikimate + phosphoenolpyruvate = 5-O-(1-carboxyvinyl)-3-phosphoshikimate + phosphate. Its pathway is metabolic intermediate biosynthesis; chorismate biosynthesis; chorismate from D-erythrose 4-phosphate and phosphoenolpyruvate: step 6/7. Its function is as follows. Catalyzes the transfer of the enolpyruvyl moiety of phosphoenolpyruvate (PEP) to the 5-hydroxyl of shikimate-3-phosphate (S3P) to produce enolpyruvyl shikimate-3-phosphate and inorganic phosphate. This chain is 3-phosphoshikimate 1-carboxyvinyltransferase, found in Bacillus subtilis (strain 168).